A 220-amino-acid polypeptide reads, in one-letter code: UPF0502 protein VVA1225 (220 aa).

Belongs to the UPF0502 family.

The protein is UPF0502 protein VVA1225 of Vibrio vulnificus (strain YJ016).